A 1218-amino-acid polypeptide reads, in one-letter code: DNA polymerase subunit gamma-1 (1218 aa).

The tract at residues leucine 31–glycine 50 is disordered. Positions valine 179–glutamate 183 match the Exo I motif. The Exonuclease activity role is filled by aspartate 181. Residues valine 250–arginine 258 carry the Exo II motif. Serine 289 lines the DNA pocket. The Exo III signature appears at tyrosine 378 to threonine 386. The interval lysine 484–serine 524 is disordered. Positions alanine 492 to glycine 553 are accessory-interacting determinant. Positions methionine 507 to glutamate 520 are enriched in acidic residues. Residue arginine 561 coordinates RNA. Serine 575 is a binding site for DNA. The RNA site is built by histidine 733, glycine 742, and lysine 747. Positions 785 and 828 each coordinate DNA. Residues threonine 837–asparagine 843 are trigger loop. RNA is bound by residues serine 842 and arginine 848. The Pol A signature appears at valine 866–leucine 875. Residues aspartate 869, valine 870, serine 872, glutamate 874, arginine 922, lysine 926, and tyrosine 930 each coordinate a 2'-deoxyribonucleoside 5'-triphosphate. Mg(2+)-binding residues include aspartate 869 and valine 870. The Pol B signature appears at arginine 922 to glycine 937. Residues threonine 1073 and serine 1074 each contribute to the DNA site. The short motif at histidine 1113–valine 1120 is the Pol C element. Residue aspartate 1114 participates in a 2'-deoxyribonucleoside 5'-triphosphate binding. Aspartate 1114 lines the Mg(2+) pocket.

The protein belongs to the DNA polymerase type-A family. As to quaternary structure, heterotrimer composed of a catalytic subunit and a homodimer of accessory subunits (POLG:POLG2). Interacts with TTC3. Interacts with LIG3. It depends on Mg(2+) as a cofactor.

It is found in the mitochondrion. Its subcellular location is the mitochondrion matrix. The protein resides in the mitochondrion nucleoid. It carries out the reaction DNA(n) + a 2'-deoxyribonucleoside 5'-triphosphate = DNA(n+1) + diphosphate. It catalyses the reaction a 3'-end 2'-deoxyribonucleotidyl-deoxyribonucleotide-DNA + H2O = a 3'-end 2'-deoxyribonucleotide-DNA + a 2'-deoxyribonucleoside 5'-phosphate + H(+). The enzyme catalyses a 5'-end 2'-deoxyribose-2'-deoxyribonucleotide-DNA = (2E,4S)-4-hydroxypenten-2-al-5-phosphate + a 5'-end 5'-phospho-2'-deoxyribonucleoside-DNA + H(+). With respect to regulation, inhibited by dideoxynucleotides such as antiviral agent zalcitabine. Its function is as follows. Catalytic subunit of DNA polymerase gamma solely responsible for replication of mitochondrial DNA (mtDNA). Replicates both heavy and light strands of the circular mtDNA genome using a single-stranded DNA template, RNA primers and the four deoxyribonucleoside triphosphates as substrates. Has 5' -&gt; 3' polymerase activity. Functionally interacts with TWNK and SSBP1 at the replication fork to form a highly processive replisome, where TWNK unwinds the double-stranded DNA template prior to replication and SSBP1 covers the parental heavy strand to enable continuous replication of the entire mitochondrial genome. A single nucleotide incorporation cycle includes binding of the incoming nucleotide at the insertion site, a phosphodiester bond formation reaction that extends the 3'-end of the primer DNA, and translocation of the primer terminus to the post-insertion site. After completing replication of a mtDNA strand, mediates 3' -&gt; 5' exonucleolytic degradation at the nick to enable proper ligation. Highly accurate due to high nucleotide selectivity and 3' -&gt; 5' exonucleolytic proofreading. Proficiently corrects base substitutions, single-base additions and deletions in non-repetitive sequences and short repeats, but displays lower proofreading activity when replicating longer homopolymeric stretches. Exerts exonuclease activity toward single-stranded DNA and double-stranded DNA containing 3'-terminal mispairs. When a misincorporation occurs, transitions from replication to a pro-nucleolytic editing mode and removes the missincorporated nucleoside in the exonuclease active site. Proceeds via an SN2 nucleolytic mechanism in which Asp-198 catalyzes phosphodiester bond hydrolysis and Glu-200 stabilizes the leaving group. As a result the primer strand becomes one nucleotide shorter and is positioned in the post-insertion site, ready to resume DNA synthesis. Exerts 5'-deoxyribose phosphate (dRP) lyase activity and mediates repair-associated mtDNA synthesis (gap filling) in base-excision repair pathway. Catalyzes the release of the 5'-terminal 2-deoxyribose-5-phosphate sugar moiety from incised apurinic/apyrimidinic (AP) sites to produce a substrate for DNA ligase. The dRP lyase reaction does not require divalent metal ions and likely proceeds via a Schiff base intermediate in a beta-elimination reaction mechanism. The chain is DNA polymerase subunit gamma-1 from Mus musculus (Mouse).